Consider the following 244-residue polypeptide: Lipoprotein-releasing system ATP-binding protein LolD (244 aa).

Residues 19 to 244 (IRAEALAKTY…KLRELAPSAV (226 aa)) enclose the ABC transporter domain. 55-62 (GASGAGKS) contributes to the ATP binding site.

Belongs to the ABC transporter superfamily. Lipoprotein translocase (TC 3.A.1.125) family. The complex is composed of two ATP-binding proteins (LolD) and two transmembrane proteins (LolC and LolE).

It localises to the cell inner membrane. Its function is as follows. Part of the ABC transporter complex LolCDE involved in the translocation of mature outer membrane-directed lipoproteins, from the inner membrane to the periplasmic chaperone, LolA. Responsible for the formation of the LolA-lipoprotein complex in an ATP-dependent manner. The chain is Lipoprotein-releasing system ATP-binding protein LolD from Xanthomonas euvesicatoria pv. vesicatoria (strain 85-10) (Xanthomonas campestris pv. vesicatoria).